We begin with the raw amino-acid sequence, 285 residues long: tRNA pseudouridine synthase A (285 aa).

Catalysis depends on D64, which acts as the Nucleophile. Y125 provides a ligand contact to substrate.

This sequence belongs to the tRNA pseudouridine synthase TruA family. In terms of assembly, homodimer.

It catalyses the reaction uridine(38/39/40) in tRNA = pseudouridine(38/39/40) in tRNA. Functionally, formation of pseudouridine at positions 38, 39 and 40 in the anticodon stem and loop of transfer RNAs. This chain is tRNA pseudouridine synthase A, found in Streptomyces avermitilis (strain ATCC 31267 / DSM 46492 / JCM 5070 / NBRC 14893 / NCIMB 12804 / NRRL 8165 / MA-4680).